Consider the following 434-residue polypeptide: UDP-N-acetylglucosamine 1-carboxyvinyltransferase 1 (434 aa).

22 to 23 (KN) lines the phosphoenolpyruvate pocket. R93 is a UDP-N-acetyl-alpha-D-glucosamine binding site. C117 serves as the catalytic Proton donor. Position 117 is a 2-(S-cysteinyl)pyruvic acid O-phosphothioketal (C117). UDP-N-acetyl-alpha-D-glucosamine is bound by residues 122–126 (RPIDQ), D306, and V328.

The protein belongs to the EPSP synthase family. MurA subfamily.

The protein localises to the cytoplasm. It carries out the reaction phosphoenolpyruvate + UDP-N-acetyl-alpha-D-glucosamine = UDP-N-acetyl-3-O-(1-carboxyvinyl)-alpha-D-glucosamine + phosphate. Its pathway is cell wall biogenesis; peptidoglycan biosynthesis. Cell wall formation. Adds enolpyruvyl to UDP-N-acetylglucosamine. The sequence is that of UDP-N-acetylglucosamine 1-carboxyvinyltransferase 1 from Bacillus cereus (strain ATCC 10987 / NRS 248).